The primary structure comprises 886 residues: UPF0592 membrane protein C7D4.03c (886 aa).

Residues 87-112 (ILNEPYNESPSSSSSDSSSRSTSPFS) form a disordered region. Positions 95 to 112 (SPSSSSSDSSSRSTSPFS) are enriched in low complexity. Transmembrane regions (helical) follow at residues 277–297 (FCAS…DHFL), 374–394 (GGFF…QFSF), and 400–420 (VIYF…LTIS).

Belongs to the UPF0592 family.

It localises to the membrane. This chain is UPF0592 membrane protein C7D4.03c, found in Schizosaccharomyces pombe (strain 972 / ATCC 24843) (Fission yeast).